The following is a 386-amino-acid chain: Alanine racemase (386 aa).

Lys-48 acts as the Proton acceptor; specific for D-alanine in catalysis. Lys-48 bears the N6-(pyridoxal phosphate)lysine mark. Residue Arg-149 coordinates substrate. Tyr-278 acts as the Proton acceptor; specific for L-alanine in catalysis. Residue Met-326 participates in substrate binding.

Belongs to the alanine racemase family. The cofactor is pyridoxal 5'-phosphate.

The enzyme catalyses L-alanine = D-alanine. The protein operates within amino-acid biosynthesis; D-alanine biosynthesis; D-alanine from L-alanine: step 1/1. Its function is as follows. Catalyzes the interconversion of L-alanine and D-alanine. May also act on other amino acids. The protein is Alanine racemase (alr) of Nostoc sp. (strain PCC 7120 / SAG 25.82 / UTEX 2576).